The primary structure comprises 174 residues: Shikimate kinase 2 (174 aa).

12–17 (GAGKTT) is an ATP binding site. Mg(2+) is bound by residues Thr16 and Asp32. Substrate contacts are provided by Asp34, Arg58, and Gly79. The tract at residues 112-126 (AEDPEEAQRPSLTGK) is LID domain. Arg120 contacts ATP. Arg139 provides a ligand contact to substrate. Gln155 is an ATP binding site.

Belongs to the shikimate kinase family. AroL subfamily. As to quaternary structure, monomer. Mg(2+) is required as a cofactor.

It localises to the cytoplasm. The enzyme catalyses shikimate + ATP = 3-phosphoshikimate + ADP + H(+). The protein operates within metabolic intermediate biosynthesis; chorismate biosynthesis; chorismate from D-erythrose 4-phosphate and phosphoenolpyruvate: step 5/7. In terms of biological role, catalyzes the specific phosphorylation of the 3-hydroxyl group of shikimic acid using ATP as a cosubstrate. This chain is Shikimate kinase 2, found in Yersinia pseudotuberculosis serotype IB (strain PB1/+).